Consider the following 123-residue polypeptide: Holo-[acyl-carrier-protein] synthase (123 aa).

Mg(2+)-binding residues include aspartate 8 and glutamate 55.

It belongs to the P-Pant transferase superfamily. AcpS family. Requires Mg(2+) as cofactor.

It is found in the cytoplasm. It catalyses the reaction apo-[ACP] + CoA = holo-[ACP] + adenosine 3',5'-bisphosphate + H(+). Functionally, transfers the 4'-phosphopantetheine moiety from coenzyme A to a Ser of acyl-carrier-protein. The protein is Holo-[acyl-carrier-protein] synthase of Caldicellulosiruptor saccharolyticus (strain ATCC 43494 / DSM 8903 / Tp8T 6331).